The primary structure comprises 145 residues: NADH-ubiquinone oxidoreductase subunit 8 (145 aa).

4Fe-4S ferredoxin-type domains lie at 43 to 73 and 83 to 112; these read LRFY…VRVG and DWFT…HSLF. Residues C53, C56, C59, C63, C92, C95, C98, and C102 each coordinate [4Fe-4S] cluster.

It belongs to the complex I 23 kDa subunit family. Requires [4Fe-4S] cluster as cofactor.

It is found in the mitochondrion. It catalyses the reaction a ubiquinone + NADH + 5 H(+)(in) = a ubiquinol + NAD(+) + 4 H(+)(out). In terms of biological role, core subunit of the mitochondrial membrane respiratory chain NADH dehydrogenase (Complex I) that is believed to belong to the minimal assembly required for catalysis. Complex I functions in the transfer of electrons from NADH to the respiratory chain. The immediate electron acceptor for the enzyme is believed to be ubiquinone. May donate electrons to ubiquinone. The sequence is that of NADH-ubiquinone oxidoreductase subunit 8 (M-ISP1) from Trypanosoma brucei brucei.